The sequence spans 282 residues: Shikimate dehydrogenase (NADP(+)) (282 aa).

Residues 15-17 (SKS) and Thr62 each bind shikimate. Catalysis depends on Lys66, which acts as the Proton acceptor. Residues Asn87 and Asp103 each coordinate shikimate. NADP(+) contacts are provided by residues 128–132 (GAGGA), 152–157 (NRTPAK), and Met216. Tyr218 serves as a coordination point for shikimate. Residue Gly240 participates in NADP(+) binding.

Belongs to the shikimate dehydrogenase family. In terms of assembly, homodimer.

The catalysed reaction is shikimate + NADP(+) = 3-dehydroshikimate + NADPH + H(+). It participates in metabolic intermediate biosynthesis; chorismate biosynthesis; chorismate from D-erythrose 4-phosphate and phosphoenolpyruvate: step 4/7. Involved in the biosynthesis of the chorismate, which leads to the biosynthesis of aromatic amino acids. Catalyzes the reversible NADPH linked reduction of 3-dehydroshikimate (DHSA) to yield shikimate (SA). This chain is Shikimate dehydrogenase (NADP(+)), found in Nitrosococcus oceani (strain ATCC 19707 / BCRC 17464 / JCM 30415 / NCIMB 11848 / C-107).